Consider the following 220-residue polypeptide: Putative DNA repair glycosylase MJ1434 (220 aa).

[4Fe-4S] cluster contacts are provided by cysteine 202, cysteine 208, cysteine 211, and cysteine 217.

Belongs to the Nth/MutY family. [4Fe-4S] cluster serves as cofactor.

The chain is Putative DNA repair glycosylase MJ1434 from Methanocaldococcus jannaschii (strain ATCC 43067 / DSM 2661 / JAL-1 / JCM 10045 / NBRC 100440) (Methanococcus jannaschii).